The chain runs to 172 residues: Ribosome maturation factor RimM (172 aa).

The PRC barrel domain occupies 95–168 (DEGEFYYHQI…RVDVAIMEGL (74 aa)).

This sequence belongs to the RimM family. Binds ribosomal protein uS19.

It localises to the cytoplasm. In terms of biological role, an accessory protein needed during the final step in the assembly of 30S ribosomal subunit, possibly for assembly of the head region. Essential for efficient processing of 16S rRNA. May be needed both before and after RbfA during the maturation of 16S rRNA. It has affinity for free ribosomal 30S subunits but not for 70S ribosomes. In Streptococcus uberis (strain ATCC BAA-854 / 0140J), this protein is Ribosome maturation factor RimM.